The sequence spans 469 residues: Probable periplasmic serine endoprotease DegP-like (469 aa).

Residues 1 to 25 form the signal peptide; sequence MNRLLKQVCMVVVSSFMMASMLTHA. Active-site charge relay system residues include His-114, Asp-144, and Ser-217. Substrate contacts are provided by residues 215–217 and 272–276; these read GNS and LGVLI. PDZ domains follow at residues 261–352 and 358–458; these read LKSD…YRDG and SVTL…IRQG.

This sequence belongs to the peptidase S1C family.

Its subcellular location is the periplasm. It carries out the reaction Acts on substrates that are at least partially unfolded. The cleavage site P1 residue is normally between a pair of hydrophobic residues, such as Val-|-Val.. In terms of biological role, might be efficient in the degradation of transiently denatured and unfolded proteins which accumulate in the periplasm following stress conditions. The protein is Probable periplasmic serine endoprotease DegP-like of Marinomonas sp. (strain MWYL1).